The chain runs to 380 residues: Pectin lyase (380 aa).

The signal sequence occupies residues Met1–Ala20. N-linked (GlcNAc...) asparagine glycosylation occurs at Asn130.

It belongs to the polysaccharide lyase 1 family.

It localises to the secreted. The enzyme catalyses Eliminative cleavage of (1-&gt;4)-alpha-D-galacturonan methyl ester to give oligosaccharides with 4-deoxy-6-O-methyl-alpha-D-galact-4-enuronosyl groups at their non-reducing ends.. This Colletotrichum gloeosporioides (Anthracnose fungus) protein is Pectin lyase (PNLA).